A 521-amino-acid polypeptide reads, in one-letter code: CDP-diacylglycerol--glycerol-3-phosphate 3-phosphatidyltransferase (521 aa).

ATP is bound at residue 91 to 98; the sequence is ASLYLGKS. 2 consecutive PLD phosphodiesterase domains span residues 177–203 and 419–457; these read GLGL…SNDY and NGWS…TRRA. Residues H182, K184, and D189 contribute to the active site.

Belongs to the CDP-alcohol phosphatidyltransferase class-II family.

Its subcellular location is the mitochondrion. It carries out the reaction a CDP-1,2-diacyl-sn-glycerol + sn-glycerol 3-phosphate = a 1,2-diacyl-sn-glycero-3-phospho-(1'-sn-glycero-3'-phosphate) + CMP + H(+). It participates in phospholipid metabolism; phosphatidylglycerol biosynthesis; phosphatidylglycerol from CDP-diacylglycerol: step 1/2. In terms of biological role, essential for the viability of mitochondrial petite mutant. Catalyzes the committed step to the synthesis of the acidic phospholipids. In Saccharomyces pastorianus (Lager yeast), this protein is CDP-diacylglycerol--glycerol-3-phosphate 3-phosphatidyltransferase (PGS1).